The sequence spans 367 residues: uncharacterized protein (367 aa).

4 consecutive transmembrane segments (helical) span residues 35 to 55, 61 to 81, 92 to 112, and 113 to 133; these read YVYD…IILW, LALF…TLLV, EVAD…TAAG, and LMFS…PLFL. Disordered stretches follow at residues 177-220, 249-283, and 296-367; these read KLPK…PASI, SNIK…YYTP, and GDIS…SRPK. The span at 257-274 shows a compositional bias: polar residues; that stretch reads NTKSILHTPLNRRSPSGS. Over residues 302 to 312 the composition is skewed to low complexity; that stretch reads SSSSTSSKTST. A compositionally biased stretch (basic and acidic residues) spans 323 to 342; it reads SRSERNARHHRNKEDHRQNQ. The span at 357–367 shows a compositional bias: basic residues; sequence PRRKKYRSRPK.

Belongs to the chlamydial CPn_0443/CT_005/TC_0273 family.

The protein resides in the cell membrane. This is an uncharacterized protein from Chlamydia muridarum (strain MoPn / Nigg).